Reading from the N-terminus, the 723-residue chain is Zinc finger protein 750 (723 aa).

Residues 25 to 51 (YKCFQCPFTCNEKSHLFNHMKYGLCKN) form a CCHC-type zinc finger. Zn(2+) contacts are provided by Cys27, Cys30, His43, and Cys49. Disordered regions lie at residues 64-91 (KCPK…SKSV), 132-153 (LHRA…QPAL), 359-427 (ASSP…SQTC), 466-630 (PAQA…SEEQ), and 650-723 (RVGD…ARVS). Residues 67 to 91 (KSNSLDPKQTNQPDATAKPASSKSV) show a composition bias toward polar residues. The span at 360–369 (SSPSRLNPSD) shows a compositional bias: polar residues. Positions 370-397 (PNRKHVEFESPIPEAKDSSKAGQRDTEG) are enriched in basic and acidic residues. Over residues 470–482 (AETTAESPVSLNV) the composition is skewed to polar residues. Over residues 500 to 509 (AAPSSPDDSS) the composition is skewed to low complexity. The span at 530–545 (PTYQGSPQAETASFSE) shows a compositional bias: polar residues. Composition is skewed to low complexity over residues 563-582 (APRP…AAVP) and 606-616 (GDGAPPTGPGE). Over residues 666 to 678 (DTPTLSSMESQEA) the composition is skewed to polar residues.

Expressed in the skin, prostate, lung, placenta and thymus, and at low level in T-cells. Not expressed in peripheral blood leukocytes, pancreas and brain. Clearly expressed in primary keratinocytes but not in fibroblasts.

The protein resides in the nucleus. In terms of biological role, transcription factor involved in epidermis differentiation. Required for terminal epidermal differentiation: acts downstream of p63/TP63 and activates expression of late epidermal differentiation genes. Specifically binds to the promoter of KLF4 and promotes its expression. This Homo sapiens (Human) protein is Zinc finger protein 750 (ZNF750).